The sequence spans 266 residues: Bidirectional sugar transporter SWEET7b (266 aa).

Topologically, residues 1-9 are extracellular; sequence MVSPDLIRN. A helical membrane pass occupies residues 10–30; it reads MVGIVGNIISFGLFLSPVPTF. The 88-residue stretch at 10 to 97 folds into the MtN3/slv 1 domain; sequence MVGIVGNIIS…TIFFLFSDKK (88 aa). Residues 31-45 lie on the Cytoplasmic side of the membrane; that stretch reads YRIIKNKDVQDFKAD. A helical transmembrane segment spans residues 46–66; that stretch reads PYLATLLNCMLWVFYGLPIVH. Residues 67 to 69 are Extracellular-facing; that stretch reads PNS. The helical transmembrane segment at 70 to 90 threads the bilayer; sequence ILVVTINGIGLIIEAVYLTIF. Residues 91–101 are Cytoplasmic-facing; the sequence is FLFSDKKNKKK. Residues 102-122 traverse the membrane as a helical segment; sequence MGVVLATEALFMAAVVLGVLL. The Extracellular portion of the chain corresponds to 123-131; the sequence is GAHTHQRRS. The helical transmembrane segment at 132 to 152 threads the bilayer; it reads LIVGILCAIFGTIMYSSPLTI. The MtN3/slv 2 domain occupies 133 to 216; the sequence is IVGILCAIFG…LILYAIYYRT (84 aa). Topologically, residues 153–165 are cytoplasmic; the sequence is MSQVVKTKSVEYM. Residues 166 to 186 form a helical membrane-spanning segment; the sequence is PLLLSVVSFLNGLCWTSYALI. Residues 187–189 are Extracellular-facing; that stretch reads RLD. A helical transmembrane segment spans residues 190–210; sequence IFITIPNGLGVLFALMQLILY. Topologically, residues 211–266 are cytoplasmic; that stretch reads AIYYRTTPKKQDKNLELPTVAPVAKDTSIVTPVSKDDDVVDGGNASHVTINITIEP.

It belongs to the SWEET sugar transporter family. As to quaternary structure, forms homooligomers and/or heterooligomers.

Its subcellular location is the cell membrane. In terms of biological role, mediates both low-affinity uptake and efflux of sugar across the plasma membrane. The chain is Bidirectional sugar transporter SWEET7b (SWEET7B) from Oryza sativa subsp. indica (Rice).